The primary structure comprises 686 residues: Putative cuticle collagen 99 (686 aa).

2 disordered regions span residues 42 to 79 and 163 to 444; these read PPIGNSDDNSDDVAKSRKVRNSCMCPPGPPGERGPVGP and GPIG…SLVA. Residues 67–79 show a composition bias toward pro residues; it reads PPGPPGERGPVGP. Triple-helical region regions lie at residues 142 to 201, 230 to 263, and 268 to 296; these read GMPG…KGDR, GPPGPPGPPGPPGPAGRDGRHGMKGDRGLPGFDG, and GPKGETGNPGRDGIPGARGPPGERGEKGD. The segment covering 231 to 243 has biased composition (pro residues); that stretch reads PPGPPGPPGPPGP. The segment covering 246-256 has biased composition (basic and acidic residues); sequence RDGRHGMKGDR. The segment covering 306–318 has biased composition (low complexity); that stretch reads GQSVSTVSSSGSQ. Composition is skewed to basic and acidic residues over residues 361-373 and 401-417; these read EKGERGERGETGD and RDGRPGEKGEKGEHGLR. Residues 394 to 439 are triple-helical region; the sequence is GPPGPPGRDGRPGEKGEKGEHGLRGDMGLPGPEGTPGKRGRRGRHG. N-linked (GlcNAc...) asparagine glycans are attached at residues asparagine 446 and asparagine 535. Positions 475-650 are disordered; the sequence is KNVIPGPPGP…TGPDGLPLPY (176 aa). Triple-helical region regions lie at residues 479 to 536, 538 to 576, and 577 to 636; these read PGPP…SGNQ, GPRGPPGLPGPPGEKGDLGPPGLPGQPGALGLPGHPGPM, and GLRG…PGLD. Residues 540–549 show a composition bias toward pro residues; sequence RGPPGLPGPP. Residues 563-581 show a composition bias toward low complexity; the sequence is QPGALGLPGHPGPMGLRGP.

This sequence belongs to the cuticular collagen family. Collagen polypeptide chains are complexed within the cuticle by disulfide bonds and other types of covalent cross-links.

Its function is as follows. Nematode cuticles are composed largely of collagen-like proteins. The cuticle functions both as an exoskeleton and as a barrier to protect the worm from its environment. This is Putative cuticle collagen 99 from Caenorhabditis briggsae.